A 137-amino-acid polypeptide reads, in one-letter code: Histone H2B (137 aa).

Residues 1-10 (MPPKAADKKP) are compositionally biased toward basic and acidic residues. Residues 1–45 (MPPKAADKKPANKAPATASKAPEKKDAGKKTAASGEKKKRTKARK) form a disordered region. Lys8 and Lys9 each carry N6-acetyllysine; alternate. Residues Lys8 and Lys9 each participate in a glycyl lysine isopeptide (Lys-Gly) (interchain with G-Cter in SUMO); alternate cross-link. Lys13 carries the N6-acetyllysine modification. N6-acetyllysine; alternate is present on Lys24. A Glycyl lysine isopeptide (Lys-Gly) (interchain with G-Cter in SUMO); alternate cross-link involves residue Lys24. A Glycyl lysine isopeptide (Lys-Gly) (interchain with G-Cter in SUMO) cross-link involves residue Lys25. Residue Lys131 forms a Glycyl lysine isopeptide (Lys-Gly) (interchain with G-Cter in ubiquitin) linkage.

The protein belongs to the histone H2B family. In terms of assembly, the nucleosome is a histone octamer containing two molecules each of H2A, H2B, H3 and H4 assembled in one H3-H4 heterotetramer and two H2A-H2B heterodimers. The octamer wraps approximately 147 bp of DNA. Post-translationally, monoubiquitinated to form H2BK123ub1. H2BK123ub1 gives a specific tag for epigenetic transcriptional activation and is also prerequisite for H3K4me and H3K79me formation. H2BK123ub1 also modulates the formation of double-strand breaks during meiosis and is a prerequisite for DNA-damage checkpoint activation. In terms of processing, acetylated by GCN5 to form H2BK11ac and H2BK16ac. H2BK16ac can also be formed by ESA1. Acetylation of N-terminal lysines and particularly formation of H2BK11acK16ac has a positive effect on transcription. Sumoylation to form H2BK6su or H2BK7su, and probably also H2BK16su or H2BK17su, occurs preferentially near the telomeres and represses gene transcription.

Its subcellular location is the nucleus. It is found in the chromosome. Functionally, core component of nucleosome. Nucleosomes wrap and compact DNA into chromatin, limiting DNA accessibility to the cellular machineries which require DNA as a template. Histones thereby play a central role in transcription regulation, DNA repair, DNA replication and chromosomal stability. DNA accessibility is regulated via a complex set of post-translational modifications of histones, also called histone code, and nucleosome remodeling. This chain is Histone H2B (HTB1), found in Podospora anserina (Pleurage anserina).